Consider the following 195-residue polypeptide: Large ribosomal subunit protein mL58 (195 aa).

The N-terminal 18 residues, 1–18, are a transit peptide targeting the mitochondrion; that stretch reads MIGRGVCCRSFHTAGSAW.

This sequence belongs to the mitochondrion-specific ribosomal protein mL58 family. As to quaternary structure, component of the mitochondrial large ribosomal subunit (mt-LSU). Mature yeast 74S mitochondrial ribosomes consist of a small (37S) and a large (54S) subunit. The 37S small subunit contains a 15S ribosomal RNA (15S mt-rRNA) and 34 different proteins. The 54S large subunit contains a 21S rRNA (21S mt-rRNA) and 46 different proteins.

Its subcellular location is the mitochondrion. Its function is as follows. Component of the mitochondrial ribosome (mitoribosome), a dedicated translation machinery responsible for the synthesis of mitochondrial genome-encoded proteins, including at least some of the essential transmembrane subunits of the mitochondrial respiratory chain. The mitoribosomes are attached to the mitochondrial inner membrane and translation products are cotranslationally integrated into the membrane. The chain is Large ribosomal subunit protein mL58 (MRPL20) from Saccharomyces cerevisiae (strain ATCC 204508 / S288c) (Baker's yeast).